The following is a 405-amino-acid chain: Imidazolonepropionase (405 aa).

Positions 73 and 75 each coordinate Fe(3+). His73 and His75 together coordinate Zn(2+). 4-imidazolone-5-propanoate contacts are provided by Arg82, Tyr145, and His178. Residue Tyr145 participates in N-formimidoyl-L-glutamate binding. Residue His243 coordinates Fe(3+). A Zn(2+)-binding site is contributed by His243. A 4-imidazolone-5-propanoate-binding site is contributed by Gln246. Asp318 lines the Fe(3+) pocket. Position 318 (Asp318) interacts with Zn(2+). N-formimidoyl-L-glutamate is bound by residues Asn320 and Gly322. Residue Thr323 participates in 4-imidazolone-5-propanoate binding.

It belongs to the metallo-dependent hydrolases superfamily. HutI family. The cofactor is Zn(2+). Requires Fe(3+) as cofactor.

The protein localises to the cytoplasm. It carries out the reaction 4-imidazolone-5-propanoate + H2O = N-formimidoyl-L-glutamate. It functions in the pathway amino-acid degradation; L-histidine degradation into L-glutamate; N-formimidoyl-L-glutamate from L-histidine: step 3/3. Its function is as follows. Catalyzes the hydrolytic cleavage of the carbon-nitrogen bond in imidazolone-5-propanoate to yield N-formimidoyl-L-glutamate. It is the third step in the universal histidine degradation pathway. The sequence is that of Imidazolonepropionase from Brucella anthropi (strain ATCC 49188 / DSM 6882 / CCUG 24695 / JCM 21032 / LMG 3331 / NBRC 15819 / NCTC 12168 / Alc 37) (Ochrobactrum anthropi).